The sequence spans 618 residues: Leucine aminopeptidase 2 (618 aa).

Residues 139–141 and 271–276 contribute to the a peptide site; these read QCQ and PYGGME. His300 is a binding site for Zn(2+). Glu301 functions as the Proton acceptor in the catalytic mechanism. 2 residues coordinate Zn(2+): His304 and Glu323. Residue Tyr389 is the Proton donor of the active site.

The protein belongs to the peptidase M1 family. Requires Zn(2+) as cofactor.

The protein resides in the cytoplasm. It is found in the nucleus. It carries out the reaction an epoxide + H2O = an ethanediol. Its function is as follows. Aminopeptidase that preferentially cleaves di- and tripeptides. Also has low epoxide hydrolase activity (in vitro). Can hydrolyze the epoxide leukotriene LTA(4) but it forms preferentially 5,6-dihydroxy-7,9,11,14-eicosatetraenoic acid rather than the cytokine leukotriene B(4) as the product compared to the homologous mammalian enzyme (in vitro). The protein is Leucine aminopeptidase 2 of Aspergillus clavatus (strain ATCC 1007 / CBS 513.65 / DSM 816 / NCTC 3887 / NRRL 1 / QM 1276 / 107).